We begin with the raw amino-acid sequence, 136 residues long: ATP synthase epsilon chain (136 aa).

This sequence belongs to the ATPase epsilon chain family. As to quaternary structure, F-type ATPases have 2 components, CF(1) - the catalytic core - and CF(0) - the membrane proton channel. CF(1) has five subunits: alpha(3), beta(3), gamma(1), delta(1), epsilon(1). CF(0) has three main subunits: a, b and c.

The protein resides in the cell inner membrane. Its function is as follows. Produces ATP from ADP in the presence of a proton gradient across the membrane. This chain is ATP synthase epsilon chain, found in Myxococcus xanthus (strain DK1622).